A 638-amino-acid chain; its full sequence is NBPF family member NBPF6 (638 aa).

Coiled coils occupy residues 10–43 and 69–115; these read SERA…EKFL and DSVL…KLRE. Residues 157–285 form a disordered region; that stretch reads HLVHKLSPEN…VPPRHHDKSN (129 aa). The span at 165–179 shows a compositional bias: acidic residues; that stretch reads ENDEDEDEDEDDKDE. Residues 174 to 261 form the Olduvai 1 domain; that stretch reads EDDKDEEVEK…EEEEALNIPP (88 aa). The segment covering 192-202 has biased composition (basic and acidic residues); it reads EVQKTEEKEVP. Over residues 214–226 the composition is skewed to low complexity; sequence SNSHNPSNSNQPH. Composition is skewed to basic and acidic residues over residues 232–251 and 264–273; these read TFKE…HPHD and QNDHEEEEGK. 2 consecutive Olduvai domains span residues 326-399 and 400-503; these read EKQS…ALVD and KIKK…SQAQ. Positions 563 to 584 are disordered; sequence MKNPPQLEDDALEGSASNTQGR.

This sequence belongs to the NBPF family.

The protein localises to the cytoplasm. This chain is NBPF family member NBPF6, found in Homo sapiens (Human).